The following is a 573-amino-acid chain: Membrane protein insertase YidC (573 aa).

6 helical membrane-spanning segments follow: residues 6 to 26 (VFLI…WGKD), 355 to 375 (FSIM…LHSF), 379 to 399 (WGWA…PLSA), 446 to 466 (GGCL…WVLV), 488 to 508 (PYFI…KLTP), and 524 to 544 (PLVF…YWVV).

Belongs to the OXA1/ALB3/YidC family. Type 1 subfamily. In terms of assembly, interacts with the Sec translocase complex via SecD. Specifically interacts with transmembrane segments of nascent integral membrane proteins during membrane integration.

It is found in the cell inner membrane. Functionally, required for the insertion and/or proper folding and/or complex formation of integral membrane proteins into the membrane. Involved in integration of membrane proteins that insert both dependently and independently of the Sec translocase complex, as well as at least some lipoproteins. Aids folding of multispanning membrane proteins. The sequence is that of Membrane protein insertase YidC from Xanthomonas campestris pv. campestris (strain ATCC 33913 / DSM 3586 / NCPPB 528 / LMG 568 / P 25).